We begin with the raw amino-acid sequence, 50 residues long: Sperm protamine P1 (50 aa).

The protein belongs to the protamine P1 family. In terms of assembly, cross-linked by interchain disulfide bonds around the DNA-helix. In terms of tissue distribution, testis.

Its subcellular location is the nucleus. It localises to the chromosome. Its function is as follows. Protamines substitute for histones in the chromatin of sperm during the haploid phase of spermatogenesis. They compact sperm DNA into a highly condensed, stable and inactive complex. The polypeptide is Sperm protamine P1 (PRM1) (Saguinus imperator (Emperor tamarin)).